Consider the following 346-residue polypeptide: Peripherin-2 (346 aa).

The Cytoplasmic segment spans residues 1 to 18; it reads MALLKVKFDQKKRVKLAQ. Residues 19 to 41 form a helical membrane-spanning segment; it reads GLWLMNWFSVLAGIIIFGLGLFL. The Lumenal segment spans residues 42-62; it reads KIELRKRSDVMNNSESHFVPN. Asn53 is a glycosylation site (N-linked (GlcNAc...) asparagine). Residues 63–79 form a helical membrane-spanning segment; it reads SLIGVGVLSCVFNSLAG. Over 80–101 the chain is Cytoplasmic; that stretch reads KICYDALDPAKYAKWKPWLKPY. A helical membrane pass occupies residues 102 to 122; sequence LAVCVLFNVVLFLVALCCFLL. At 123-264 the chain is on the lumenal side; sequence RGSLESTLAH…LSYYSNLMNT (142 aa). N-linked (GlcNAc...) asparagine glycosylation is found at Asn229 and Asn263. Residues 265-283 traverse the membrane as a helical segment; sequence TGAVTLLVWLFEVTITVGL. The Cytoplasmic portion of the chain corresponds to 284–346; the sequence is RYLHTALEGM…EDAGQAPAAG (63 aa). Positions 341–346 are interaction with MREG; the sequence is QAPAAG.

It belongs to the PRPH2/ROM1 family. In terms of assembly, homodimer; disulfide-linked. Forms a homotetramer. Forms a heterotetramer with ROM1. Homotetramer and heterotetramer core complexes go on to form higher order complexes by formation of intermolecular disulfide bonds. Interacts with MREG. Interacts with STX3. Interacts with SNAP25. In terms of tissue distribution, retina (photoreceptor). In rim region of ROS (rod outer segment) disks.

Its subcellular location is the membrane. The protein resides in the cell projection. It is found in the cilium. It localises to the photoreceptor outer segment. The protein localises to the photoreceptor inner segment. Functionally, essential for retina photoreceptor outer segment disk morphogenesis, may also play a role with ROM1 in the maintenance of outer segment disk structure. Required for the maintenance of retinal outer nuclear layer thickness. Required for the correct development and organization of the photoreceptor inner segment. This is Peripherin-2 (PRPH2) from Bos taurus (Bovine).